The chain runs to 455 residues: Bifunctional protein GlmU (455 aa).

The segment at methionine 1–arginine 230 is pyrophosphorylase. UDP-N-acetyl-alpha-D-glucosamine is bound by residues leucine 9–glycine 12, lysine 23, glutamine 73, and glycine 78–threonine 79. Aspartate 103 is a binding site for Mg(2+). Residues glycine 140, glutamate 155, asparagine 170, and asparagine 228 each coordinate UDP-N-acetyl-alpha-D-glucosamine. Residue asparagine 228 coordinates Mg(2+). Residues valine 231–lysine 251 are linker. An N-acetyltransferase region spans residues glycine 252–asparagine 455. Arginine 333 and lysine 351 together coordinate UDP-N-acetyl-alpha-D-glucosamine. Histidine 363 functions as the Proton acceptor in the catalytic mechanism. Positions 366 and 377 each coordinate UDP-N-acetyl-alpha-D-glucosamine. Acetyl-CoA contacts are provided by residues asparagine 386–tyrosine 387, alanine 423, and arginine 440.

The protein in the N-terminal section; belongs to the N-acetylglucosamine-1-phosphate uridyltransferase family. This sequence in the C-terminal section; belongs to the transferase hexapeptide repeat family. Homotrimer. It depends on Mg(2+) as a cofactor.

Its subcellular location is the cytoplasm. It carries out the reaction alpha-D-glucosamine 1-phosphate + acetyl-CoA = N-acetyl-alpha-D-glucosamine 1-phosphate + CoA + H(+). The catalysed reaction is N-acetyl-alpha-D-glucosamine 1-phosphate + UTP + H(+) = UDP-N-acetyl-alpha-D-glucosamine + diphosphate. Its pathway is nucleotide-sugar biosynthesis; UDP-N-acetyl-alpha-D-glucosamine biosynthesis; N-acetyl-alpha-D-glucosamine 1-phosphate from alpha-D-glucosamine 6-phosphate (route II): step 2/2. It functions in the pathway nucleotide-sugar biosynthesis; UDP-N-acetyl-alpha-D-glucosamine biosynthesis; UDP-N-acetyl-alpha-D-glucosamine from N-acetyl-alpha-D-glucosamine 1-phosphate: step 1/1. It participates in bacterial outer membrane biogenesis; LPS lipid A biosynthesis. Catalyzes the last two sequential reactions in the de novo biosynthetic pathway for UDP-N-acetylglucosamine (UDP-GlcNAc). The C-terminal domain catalyzes the transfer of acetyl group from acetyl coenzyme A to glucosamine-1-phosphate (GlcN-1-P) to produce N-acetylglucosamine-1-phosphate (GlcNAc-1-P), which is converted into UDP-GlcNAc by the transfer of uridine 5-monophosphate (from uridine 5-triphosphate), a reaction catalyzed by the N-terminal domain. The chain is Bifunctional protein GlmU from Halalkalibacterium halodurans (strain ATCC BAA-125 / DSM 18197 / FERM 7344 / JCM 9153 / C-125) (Bacillus halodurans).